Here is a 361-residue protein sequence, read N- to C-terminus: Peptide chain release factor 1 (361 aa).

Position 237 is an N5-methylglutamine (Gln237). The segment at 286–306 (AKQDQEQAAKRKSLVGSGDRS) is disordered.

The protein belongs to the prokaryotic/mitochondrial release factor family. Post-translationally, methylated by PrmC. Methylation increases the termination efficiency of RF1.

It localises to the cytoplasm. Peptide chain release factor 1 directs the termination of translation in response to the peptide chain termination codons UAG and UAA. The protein is Peptide chain release factor 1 of Coxiella burnetii (strain CbuG_Q212) (Coxiella burnetii (strain Q212)).